The following is a 430-amino-acid chain: Cytochrome c biogenesis protein CcsB (430 aa).

3 helical membrane-spanning segments follow: residues 14–34 (LRLA…GTIL), 72–92 (SVWF…CSWR), and 162–182 (VGPL…AWGA).

It belongs to the Ccs1/CcsB family. May interact with CcsA.

It is found in the cellular thylakoid membrane. Required during biogenesis of c-type cytochromes (cytochrome c6 and cytochrome f) at the step of heme attachment. The protein is Cytochrome c biogenesis protein CcsB of Synechococcus sp. (strain WH7803).